Reading from the N-terminus, the 513-residue chain is OTU domain-containing protein 5-A (513 aa).

Disordered stretches follow at residues 1–75 and 99–136; these read MTIL…GGAG and GPGH…DEYE. The OTU domain occupies 166-289; sequence FIIKQMKEDG…NIHYNSVVNP (124 aa). Residues 171–177 form a cys-loop region; it reads MKEDGAC. Aspartate 174 is a catalytic residue. The active-site Nucleophile is cysteine 177. The variable-loop stretch occupies residues 226–236; it reads KRKNNCHGNHI. Residues 277–282 form a his-loop region; it reads YHRNIH. The active site involves histidine 282. Residues 387 to 446 are disordered; that stretch reads LEEWSGRSPRQRSTAGSPEHPDLHAELCMKPPSPGAPLILGKPPSPCAPGPSNQMSTGAD.

This sequence belongs to the peptidase C85 family.

The catalysed reaction is Thiol-dependent hydrolysis of ester, thioester, amide, peptide and isopeptide bonds formed by the C-terminal Gly of ubiquitin (a 76-residue protein attached to proteins as an intracellular targeting signal).. In terms of biological role, deubiquitinating enzyme that may function as negative regulator of the innate immune system. Has peptidase activity towards 'Lys-48'- and 'Lys-63'-linked polyubiquitin chains. Can also cleave 'Lys-11'-linked ubiquitin chains (in vitro). This Xenopus laevis (African clawed frog) protein is OTU domain-containing protein 5-A (otud5-a).